We begin with the raw amino-acid sequence, 164 residues long: CASP-like protein 1C2 (164 aa).

Residues 1–8 lie on the Cytoplasmic side of the membrane; the sequence is MAVELKKV. A helical membrane pass occupies residues 9–29; that stretch reads FSTILRFLALAATVVAVIVMI. Topologically, residues 30 to 53 are extracellular; sequence RSHDSAIVLNLTFSAKYNNTPAFK. Residue Asn39 is glycosylated (N-linked (GlcNAc...) asparagine). The helical transmembrane segment at 54-74 threads the bilayer; that stretch reads YFVIAEGIASVYTIIVIFLWS. Residues 75-80 lie on the Cytoplasmic side of the membrane; it reads KGLLGR. The chain crosses the membrane as a helical span at residues 81-101; sequence LIVILDMVTTVLLTSSISAAL. Residues 102–129 are Extracellular-facing; it reads AIAQVGKKGNSHAGWLPVCGQVPKFCDQ. A helical transmembrane segment spans residues 130 to 150; that stretch reads AIIALVAGFVAAIVYFMLLLC. Residues 151–164 are Cytoplasmic-facing; the sequence is SLHAVLTPIFAVKP.

Belongs to the Casparian strip membrane proteins (CASP) family. In terms of assembly, homodimer and heterodimers.

It localises to the cell membrane. The polypeptide is CASP-like protein 1C2 (Ricinus communis (Castor bean)).